We begin with the raw amino-acid sequence, 299 residues long: Anti-sigma-D factor RsdA (299 aa).

Residues 86 to 106 (LAAVGSVAAALLVLSGFGAVV) traverse the membrane as a helical segment. The disordered stretch occupies residues 187–299 (NTKVETRDPN…APETPVSPTH (113 aa)). Low complexity-rich tracts occupy residues 201–212 (PGSPSNPAAPGS) and 250–271 (PNST…EPGS).

In terms of assembly, interacts with ECF RNA polymerase sigma factor SigD; this should inhibit the interaction of SigD with the RNA polymerase catalytic core. In terms of processing, the cytosolic fragment is degraded by a ClpP1-ClpP2-ClpX complex, as would be expected after S1P and S2P intramembrane proteolysis. This releases SigD so that it may bind to the RNA polymerase catalytic core.

Its subcellular location is the cell membrane. Its function is as follows. An anti-sigma factor for extracytoplasmic function (ECF) sigma factor SigD. ECF sigma factors are held in an inactive form by an anti-sigma factor until released by regulated intramembrane proteolysis (RIP). RIP occurs when an extracytoplasmic signal triggers a concerted proteolytic cascade to transmit information and elicit cellular responses. The membrane-spanning regulatory substrate protein is first cut extracytoplasmically (site-1 protease, S1P), then within the membrane itself (site-2 protease, S2P), while cytoplasmic proteases finish degrading the regulatory protein, liberating the sigma factor. Neither S1P nor S2P proteases have been so far identified for this anti-sigma factor. In Mycobacterium bovis (strain ATCC BAA-935 / AF2122/97), this protein is Anti-sigma-D factor RsdA (rsda).